Reading from the N-terminus, the 33-residue chain is Non-specific lipid-transfer protein (33 aa).

An intrachain disulfide couples Cys-14 to Cys-29.

It belongs to the plant LTP family. Dimer.

Plant non-specific lipid-transfer proteins transfer phospholipids as well as galactolipids across membranes. May play a role in wax or cutin deposition in the cell walls of expanding epidermal cells and certain secretory tissues. Has antibacterial activity against Gram-positive bacteria S.aureus and S.epidermidis and blocks biofilm formation. In a mouse model, also protects against bacterial sepsis and has an anti-inflammatory effect. Exhibits antinociceptive activity upon oral or intraperitoneal application in mice. The polypeptide is Non-specific lipid-transfer protein (Morinda citrifolia (Indian mulberry)).